We begin with the raw amino-acid sequence, 492 residues long: NADH-quinone oxidoreductase subunit N (492 aa).

14 helical membrane-spanning segments follow: residues 12–32 (LLPY…MIAI), 44–64 (ISVV…AGII), 76–96 (LFVI…CALA), 115–135 (LYLL…AQHL), 138–158 (FFMS…YTYM), 169–189 (YLVL…FIYA), 212–232 (LILG…AAPF), 244–264 (PAPI…ALAV), 272–292 (LLAL…SILL), 306–326 (LLGY…VSIG), 334–354 (SMYM…VTLM), 381–401 (TAVM…AGFI), 416–438 (WFLA…RVLL), and 463–483 (IMVI…NSMI).

The protein belongs to the complex I subunit 2 family. NDH-1 is composed of 14 different subunits. Subunits NuoA, H, J, K, L, M, N constitute the membrane sector of the complex.

It localises to the cell inner membrane. It carries out the reaction a quinone + NADH + 5 H(+)(in) = a quinol + NAD(+) + 4 H(+)(out). In terms of biological role, NDH-1 shuttles electrons from NADH, via FMN and iron-sulfur (Fe-S) centers, to quinones in the respiratory chain. The immediate electron acceptor for the enzyme in this species is believed to be ubiquinone. Couples the redox reaction to proton translocation (for every two electrons transferred, four hydrogen ions are translocated across the cytoplasmic membrane), and thus conserves the redox energy in a proton gradient. This chain is NADH-quinone oxidoreductase subunit N, found in Psychrobacter arcticus (strain DSM 17307 / VKM B-2377 / 273-4).